A 331-amino-acid chain; its full sequence is HTH-type transcriptional regulator RipA (331 aa).

The region spanning 112–209 (RAVAQVLVSN…GATPSTFTTG (98 aa)) is the HTH araC/xylS-type domain. DNA-binding regions (H-T-H motif) lie at residues 129 to 150 (EEFA…LKST) and 176 to 199 (ISVV…RRHT).

Its function is as follows. Under iron limitation, RipA negatively controls the expression of the acn (aconitase), catA (catechol 1,2 dioxygenase), leuCD (isopropylmalate dehydratase), narKGHJI (nitrite/nitrate transporter and nitrate reductase), sdhCAB (succinate dehydrogenase), pta (phosphotransacetylase) and katA (catalase) genes. Binds to the consensus sequence in the promoter region. The sequence is that of HTH-type transcriptional regulator RipA from Corynebacterium glutamicum (strain ATCC 13032 / DSM 20300 / JCM 1318 / BCRC 11384 / CCUG 27702 / LMG 3730 / NBRC 12168 / NCIMB 10025 / NRRL B-2784 / 534).